The primary structure comprises 507 residues: ATP synthase subunit beta (507 aa).

Positions 1 to 22 are disordered; it reads MSSLANKAKSKGKSSKSKSNVN. 183–190 contributes to the ATP binding site; the sequence is GGAGVGKT.

Belongs to the ATPase alpha/beta chains family. As to quaternary structure, F-type ATPases have 2 components, CF(1) - the catalytic core - and CF(0) - the membrane proton channel. CF(1) has five subunits: alpha(3), beta(3), gamma(1), delta(1), epsilon(1). CF(0) has three main subunits: a(1), b(2) and c(9-12). The alpha and beta chains form an alternating ring which encloses part of the gamma chain. CF(1) is attached to CF(0) by a central stalk formed by the gamma and epsilon chains, while a peripheral stalk is formed by the delta and b chains.

The protein localises to the cell inner membrane. It catalyses the reaction ATP + H2O + 4 H(+)(in) = ADP + phosphate + 5 H(+)(out). In terms of biological role, produces ATP from ADP in the presence of a proton gradient across the membrane. The catalytic sites are hosted primarily by the beta subunits. This chain is ATP synthase subunit beta, found in Ehrlichia canis (strain Jake).